The primary structure comprises 144 residues: Large ribosomal subunit protein uL15 (144 aa).

A disordered region spans residues 1 to 60; that stretch reads MKMNTLKPAEGSKQSPKRLGRGIGSGLGKTGGRGHKGQTSRSGGTIRPGFEGGQQPLQRR. Gly residues predominate over residues 21–31; it reads RGIGSGLGKTG.

Belongs to the universal ribosomal protein uL15 family. Part of the 50S ribosomal subunit.

Its function is as follows. Binds to the 23S rRNA. The polypeptide is Large ribosomal subunit protein uL15 (Hahella chejuensis (strain KCTC 2396)).